The chain runs to 145 residues: MKLNTKYHGLLEYDEKNIVVFRKGIPGFEHLKKFILVPAEENNLFYILHSIEDENIGIIVASPFDILKDYEFELNEDKTAELKIENMEDIFIVNTVTLNSVLENITINLKAPIVINIKENIGEQLILDKVEYPIKYPLFKGEVSC.

This sequence belongs to the FliW family. In terms of assembly, interacts with translational regulator CsrA and flagellin(s).

Its subcellular location is the cytoplasm. In terms of biological role, acts as an anti-CsrA protein, binds CsrA and prevents it from repressing translation of its target genes, one of which is flagellin. Binds to flagellin and participates in the assembly of the flagellum. The protein is Flagellar assembly factor FliW of Clostridium kluyveri (strain NBRC 12016).